The sequence spans 229 residues: Coiled-coil domain-containing protein 134 (229 aa).

A signal peptide spans 1-22 (MDLLQSLAVFFVLLLPGTEVTG). Asn148 carries an N-linked (GlcNAc...) asparagine glycan. Residues 191 to 229 (PSTDPFQKALREEEKRRKKEEKRKEIRKGPRISRSQSEL) form a disordered region. Residues 196–218 (FQKALREEEKRRKKEEKRKEIRK) adopt a coiled-coil conformation. The Prevents secretion from ER signature appears at 226 to 229 (QSEL).

This sequence belongs to the CCDC134 family. Interacts with TADA2A. Associates with the PCAF complex via TADA2A binding. Post-translationally, O-glycosylated, with additional sialic acid modifications.

It is found in the endoplasmic reticulum lumen. The protein resides in the secreted. The protein localises to the cytoplasm. Its subcellular location is the nucleus. Its function is as follows. Molecular adapter required to prevent protein hyperglycosylation of HSP90B1: during translation, associates with nascent HSP90B1 and the STT3A catalytic component of the OST-A complex and tethers them to a specialized translocon that forms a microenvironment for HSP90B1 folding. In the CCDC134-containing translocon, STT3A associates with the SRT pseudosubstrate motif of HSP90B1, preventing access to facultative glycosylation sites until folding is completed, preventing hyperglycosylation and subsequent degradation of HSP90B1. In extracellular secreted form, promotes proliferation and activation of CD8(+) T-cells, suggesting a cytokine-like function. May inhibit ERK and JNK signaling activity. May suppress cell migration and invasion activity, via its effects on ERK and JNK signaling. May also localize in the nucleus: enhances stability of the PCAF histone acetyltransferase (HAT) complex member TADA2A and thus promotes PCAF-mediated histone acetyltransferase activity. Has a critical role in the regulation of osteogenesis and bone development. This is Coiled-coil domain-containing protein 134 (Ccdc134) from Rattus norvegicus (Rat).